Here is a 62-residue protein sequence, read N- to C-terminus: Large ribosomal subunit protein eL37 (62 aa).

Zn(2+) contacts are provided by cysteine 20, cysteine 23, cysteine 35, and cysteine 38. The C4-type zinc finger occupies 20 to 38 (CRRCGRVSYNVKKGYCAAC).

This sequence belongs to the eukaryotic ribosomal protein eL37 family. In terms of assembly, part of the 50S ribosomal subunit. Requires Zn(2+) as cofactor.

Its function is as follows. Binds to the 23S rRNA. The polypeptide is Large ribosomal subunit protein eL37 (Pyrococcus furiosus (strain ATCC 43587 / DSM 3638 / JCM 8422 / Vc1)).